The primary structure comprises 432 residues: Tyrosine--tRNA ligase (432 aa).

The 'HIGH' region motif lies at 46–55 (PTRPDLHLGH). Residues 232–236 (KMSKS) carry the 'KMSKS' region motif. An ATP-binding site is contributed by lysine 235. The region spanning 369-430 (IWVARLFTLA…GKDRFVRVRL (62 aa)) is the S4 RNA-binding domain.

The protein belongs to the class-I aminoacyl-tRNA synthetase family. TyrS type 2 subfamily. In terms of assembly, homodimer.

It is found in the cytoplasm. It catalyses the reaction tRNA(Tyr) + L-tyrosine + ATP = L-tyrosyl-tRNA(Tyr) + AMP + diphosphate + H(+). In terms of biological role, catalyzes the attachment of tyrosine to tRNA(Tyr) in a two-step reaction: tyrosine is first activated by ATP to form Tyr-AMP and then transferred to the acceptor end of tRNA(Tyr). This chain is Tyrosine--tRNA ligase, found in Thermus thermophilus (strain ATCC BAA-163 / DSM 7039 / HB27).